The primary structure comprises 123 residues: Galanin peptides (123 aa).

Positions 1–19 are cleaved as a signal peptide; it reads MPRGCALLLASLLLASALS. The propeptide occupies 20–30; sequence ATLGLGSPVKE. Ala-61 carries the post-translational modification Alanine amide. A phosphoserine mark is found at Ser-116 and Ser-117.

It belongs to the galanin family.

It localises to the secreted. Its function is as follows. Endocrine hormone of the central and peripheral nervous systems that binds and activates the G protein-coupled receptors GALR1, GALR2, and GALR3. This small neuropeptide may regulate diverse physiologic functions including contraction of smooth muscle of the gastrointestinal and genitourinary tract, growth hormone and insulin release and adrenal secretion. In Sus scrofa (Pig), this protein is Galanin peptides (GAL).